The chain runs to 219 residues: MSNQQALVIFSGGQDSTTCLIQAIQTYGRENVQAITFQYGQRHAVELERARWIAQDLGVKQTVLDLSLMRQITHNALMDDTAAIETAENGVPNTFVDGRNALFLLYAAIYAKGQGIRHIIAGVCETDFSGYPDCRDVFVKSMNVTLNLAMDYDFQIHTPLMYLTKAQTWALADEMGVLDYIREQTHTCYNGIVGGCRECPSCILRERGLAEYLESKKAV.

ATP is bound at residue 10–20 (FSGGQDSTTCL). Positions 188, 196, 199, and 202 each coordinate Zn(2+).

This sequence belongs to the QueC family. Zn(2+) serves as cofactor.

The enzyme catalyses 7-carboxy-7-deazaguanine + NH4(+) + ATP = 7-cyano-7-deazaguanine + ADP + phosphate + H2O + H(+). It participates in purine metabolism; 7-cyano-7-deazaguanine biosynthesis. Its function is as follows. Catalyzes the ATP-dependent conversion of 7-carboxy-7-deazaguanine (CDG) to 7-cyano-7-deazaguanine (preQ(0)). This chain is 7-cyano-7-deazaguanine synthase, found in Neisseria meningitidis serogroup B (strain ATCC BAA-335 / MC58).